The sequence spans 1087 residues: MEEDNIVDSKEIENNVEDKKEETPSSSPSPSSSLQQQQEEGGVVKQAVSNLVSSSITLHDDAKLIQVTGKDEPFHFISVPMSVEFLNLEDVFIMQSDAYIFVWCSEQANIKKKAKAVQMAQKLKVEIGCQRAVQVLEIGEEHPTFLFCLGVPKGTKLNVTKEKNDIFQVDEDDEEQVLEPEFFLFKIFTGTDGKPSIKPMEEDEGINQEMLESSACFILDCEHEMYIWLGKGVKKSTKDTLIPVAKKIWTQYDRPEYYGKLKLQPIITWVFDGAESCLFKSKFSKWVEKAQPLQTSYLSLSSKKKEALNFDVSSMHQDKEVPVINIGAASDYSNGKLLVWCSGGGSGNKWNKVEEDDFGIFYSNKSYVCHFIYKPENKNSIRSVIFFWEGLYSNQRNYIGYKFGLYKEIQKKMEGLKSDDPVEYRISQNKEPQEFINLFGTELLVLNEELALKPMIFQVRANRGTQLFPDPDSCNAKLLNSLDSFVFLFPNKYIIVWHGKVSTEHQRELAADLFTFLPPEYEAGVKEFDQGKESDNFWKIIGGNSNDIVINTFINENKEEKEKEEEEKEEEEEEEEEEEEEEEEEKDNNKTTTIIKHLRPKKIKLFLCTDNSGIFKADQINPFSQVDLNSQECVLLDVYHKVFLWKGSKSTDQKLNDTQDLAKQYIETANDQRPSDCSVELVEQYNESPLFKSYFHSWKVTPPKVFIDPIISYKQKLAERLQKEKEDLEKLKQQQEQEQEQQQKENNKIVEEVKEEVKEEDVKEEVKEEEVKEEEVKEEEVKEVAKEETKEEIKEEVNDEATEVKEVNQVEEEVKEEEVKEEVKVEVKEEEVKGEAKEEEVKEEEVKEEEVKEEVKEVKEEVKEEVKQDKEEEVNEEIKEETKEEETKEDDNKEDEKVNEENETVNEENEVGIIVSPPSEKVDEANSSSTISSPENEGSVSVKDKRKSNEPITPSVVSSSGDLLFAYEPYHGPPIHSSNSPKQGRKGGRKSHGKNQPQHKKNHSVDQSPLSSPIIPNKSLNLDIDNQSFDLNSINNNNSVEVLDGASSPLSFSSSSINSNSTHNTPSKKNKNKNKKKHNRSSSLTHA.

The disordered stretch occupies residues 1–40; the sequence is MEEDNIVDSKEIENNVEDKKEETPSSSPSPSSSLQQQQEE. Over residues 7 to 23 the composition is skewed to basic and acidic residues; sequence VDSKEIENNVEDKKEET. Low complexity predominate over residues 24–40; that stretch reads PSSSPSPSSSLQQQQEE. 4 Gelsolin-like repeats span residues 73–146, 183–286, 335–442, and 465–538; these read PFHF…PTFL, FLFK…FSKW, GKLL…FGTE, and TQLF…DNFW. Positions 550–598 form a coiled coil; sequence INTFINENKEEKEKEEEEKEEEEEEEEEEEEEEEEEKDNNKTTTIIKHL. The interval 555-592 is disordered; it reads NENKEEKEKEEEEKEEEEEEEEEEEEEEEEEKDNNKTT. Acidic residues predominate over residues 562–586; that stretch reads EKEEEEKEEEEEEEEEEEEEEEEEK. The stretch at 614–692 is one Gelsolin-like 5 repeat; that stretch reads IFKADQINPF…EQYNESPLFK (79 aa). Residues 710–912 are a coiled coil; it reads IISYKQKLAE…ETVNEENEVG (203 aa). Composition is skewed to basic and acidic residues over residues 732–770, 779–808, 817–840, and 849–900; these read KQQQ…KEEE, EEVK…KEVN, EEVK…KEEE, and EEVK…KVNE. The interval 732 to 1087 is disordered; that stretch reads KQQQEQEQEQ…HNRSSSLTHA (356 aa). The span at 901–910 shows a compositional bias: acidic residues; it reads ENETVNEENE. Polar residues-rich tracts occupy residues 925–939 and 950–961; these read ANSS…NEGS and EPITPSVVSSSG. Residues 983 to 1002 show a composition bias toward basic residues; that stretch reads QGRKGGRKSHGKNQPQHKKN. Over residues 1018-1040 the composition is skewed to polar residues; it reads KSLNLDIDNQSFDLNSINNNNSV. Residues 1047–1065 are compositionally biased toward low complexity; the sequence is SSPLSFSSSSINSNSTHNT. Basic residues predominate over residues 1066–1080; that stretch reads PSKKNKNKNKKKHNR.

This sequence belongs to the villin/gelsolin family. Interacts with rasD and abpC.

The protein localises to the cytoplasmic vesicle. In terms of biological role, involved in phototaxis. Required for coupling photodetection to the locomotory machinery of slugs. May be essential in the natural environment for the propagation of spores. This chain is Gelsolin-related protein of 125 kDa (gnrA), found in Dictyostelium discoideum (Social amoeba).